The following is a 261-amino-acid chain: Undecaprenyl-diphosphatase (261 aa).

8 helical membrane passes run 9 to 31 (ALLLGVVEGLTEFLPVSSTGHLT), 46 to 66 (FLKTFLVAIQLGAILAVLLLY), 80 to 100 (IAVAFVPTGVIGFLFYPLIKG), 102 to 122 (ILGNDAVVAFFLFFVGAVLLF), 137 to 157 (ALPLARVAWIGVFQGLAALFP), 180 to 200 (AEFSFLLALPTMFAAVGYDLW), 209 to 229 (GGWSLLLLGFLAALVTALVTV), and 240 to 260 (GFRPFALYRMALAAVYAFFFL).

Belongs to the UppP family.

It localises to the cell inner membrane. It carries out the reaction di-trans,octa-cis-undecaprenyl diphosphate + H2O = di-trans,octa-cis-undecaprenyl phosphate + phosphate + H(+). Its function is as follows. Catalyzes the dephosphorylation of undecaprenyl diphosphate (UPP). Confers resistance to bacitracin. The chain is Undecaprenyl-diphosphatase from Thermus thermophilus (strain ATCC 27634 / DSM 579 / HB8).